The chain runs to 332 residues: MEPFKHPIAILGAGSWGTALALVLARKGQKVRLWSYESDHVDEMQAEGVNNRYLPNYPFPETLKAYCDLKASLEGVTDILIVVPSFAFHEVITRMKPLIDAKTRIAWGTKGLAKGSRLLHEVVATELGQVPMAVISGPSLATEVAANLPTAVSLTSNNSQFSKDLIERLHGQRFRVYKNDDMIGVELCGSVKNILAIATGISDGLKLGSNARAALITRGLTEMGRLVSVFGGKQETLTGLAGLGDLVLTCTDNQSRNRRFGLALGEGVDKKEAQQTIGQAIEGLYNTDQVHALAQKHAIEMPLTFQVHRILHEDLDPQQAVQELLERSPKAE.

Positions 15, 16, and 110 each coordinate NADPH. Residues Lys-110, Gly-137, and Ser-139 each contribute to the sn-glycerol 3-phosphate site. An NADPH-binding site is contributed by Ala-141. Lys-192, Asp-245, Ser-255, Arg-256, and Asn-257 together coordinate sn-glycerol 3-phosphate. The active-site Proton acceptor is Lys-192. Residue Arg-256 coordinates NADPH. NADPH is bound at residue Glu-282.

The protein belongs to the NAD-dependent glycerol-3-phosphate dehydrogenase family.

Its subcellular location is the cytoplasm. It carries out the reaction sn-glycerol 3-phosphate + NAD(+) = dihydroxyacetone phosphate + NADH + H(+). The enzyme catalyses sn-glycerol 3-phosphate + NADP(+) = dihydroxyacetone phosphate + NADPH + H(+). Its pathway is membrane lipid metabolism; glycerophospholipid metabolism. Functionally, catalyzes the reduction of the glycolytic intermediate dihydroxyacetone phosphate (DHAP) to sn-glycerol 3-phosphate (G3P), the key precursor for phospholipid synthesis. This is Glycerol-3-phosphate dehydrogenase [NAD(P)+] from Coxiella burnetii (strain CbuK_Q154) (Coxiella burnetii (strain Q154)).